The chain runs to 87 residues: U3-theraphotoxin-Hhn1e (87 aa).

Positions 1 to 24 (MVNMKASMFLTFAGLVLLFVVCYA) are cleaved as a signal peptide. Residues 25-52 (SESEEKEFPKGMLSSIFAVDNDFKQEER) constitute a propeptide that is removed on maturation. 3 disulfides stabilise this stretch: Cys-54–Cys-67, Cys-61–Cys-72, and Cys-66–Cys-79.

The protein belongs to the neurotoxin 10 (Hwtx-1) family. 51 (Hntx-8) subfamily. Hntx-8 sub-subfamily. As to expression, expressed by the venom gland.

It is found in the secreted. In terms of biological role, ion channel inhibitor. The polypeptide is U3-theraphotoxin-Hhn1e (Cyriopagopus hainanus (Chinese bird spider)).